The chain runs to 643 residues: 3D-(3,5/4)-trihydroxycyclohexane-1,2-dione hydrolase (643 aa).

Thiamine diphosphate is bound at residue E65. The segment at 441 to 521 (SLPGDLQRMW…VNVLLFDNCG (81 aa)) is thiamine pyrophosphate binding. 2 residues coordinate Mg(2+): D492 and N519.

This sequence belongs to the TPP enzyme family. The cofactor is Mg(2+). Requires thiamine diphosphate as cofactor.

The enzyme catalyses 3D-3,5/4-trihydroxycyclohexane-1,2-dione + H2O = 5-deoxy-D-glucuronate + H(+). It functions in the pathway polyol metabolism; myo-inositol degradation into acetyl-CoA; acetyl-CoA from myo-inositol: step 3/7. Its function is as follows. Involved in the cleavage of the C1-C2 bond of 3D-(3,5/4)-trihydroxycyclohexane-1,2-dione (THcHDO) to yield 5-deoxy-glucuronate (5DG). The polypeptide is 3D-(3,5/4)-trihydroxycyclohexane-1,2-dione hydrolase (Clostridium botulinum (strain Alaska E43 / Type E3)).